A 276-amino-acid polypeptide reads, in one-letter code: Large ribosomal subunit protein uL2 (276 aa).

A disordered region spans residues 203–276 (NVSSGKAGRT…SDKFIVKRRK (74 aa)). Basic residues predominate over residues 210 to 220 (GRTRWLGRRPQ). Residues 265-276 (KPSDKFIVKRRK) show a composition bias toward basic and acidic residues.

Belongs to the universal ribosomal protein uL2 family. As to quaternary structure, part of the 50S ribosomal subunit. Forms a bridge to the 30S subunit in the 70S ribosome.

One of the primary rRNA binding proteins. Required for association of the 30S and 50S subunits to form the 70S ribosome, for tRNA binding and peptide bond formation. It has been suggested to have peptidyltransferase activity; this is somewhat controversial. Makes several contacts with the 16S rRNA in the 70S ribosome. This Coprothermobacter proteolyticus (strain ATCC 35245 / DSM 5265 / OCM 4 / BT) protein is Large ribosomal subunit protein uL2.